An 877-amino-acid polypeptide reads, in one-letter code: Alanine--tRNA ligase (877 aa).

Residues H563, H567, C665, and H669 each coordinate Zn(2+).

The protein belongs to the class-II aminoacyl-tRNA synthetase family. Zn(2+) is required as a cofactor.

It is found in the cytoplasm. It catalyses the reaction tRNA(Ala) + L-alanine + ATP = L-alanyl-tRNA(Ala) + AMP + diphosphate. Catalyzes the attachment of alanine to tRNA(Ala) in a two-step reaction: alanine is first activated by ATP to form Ala-AMP and then transferred to the acceptor end of tRNA(Ala). Also edits incorrectly charged Ser-tRNA(Ala) and Gly-tRNA(Ala) via its editing domain. This Thermoanaerobacter pseudethanolicus (strain ATCC 33223 / 39E) (Clostridium thermohydrosulfuricum) protein is Alanine--tRNA ligase.